Reading from the N-terminus, the 126-residue chain is Histone H2B 1/2/3/4/6 (126 aa).

Residues 1–12 (MPEPAKSAPAPK) are compositionally biased toward low complexity. Residues 1–36 (MPEPAKSAPAPKKGSKKAVTKTQKKGDKKRKKSRKE) are disordered. 2 positions are modified to N6-acetyllysine: lysine 6 and lysine 13. Residues 13–34 (KGSKKAVTKTQKKGDKKRKKSR) show a composition bias toward basic residues. Serine 15 bears the Phosphoserine mark. N6-acetyllysine occurs at positions 16 and 21. Lysine 121 is covalently cross-linked (Glycyl lysine isopeptide (Lys-Gly) (interchain with G-Cter in ubiquitin)).

It belongs to the histone H2B family. In terms of assembly, the nucleosome is a histone octamer containing two molecules each of H2A, H2B, H3 and H4 assembled in one H3-H4 heterotetramer and two H2A-H2B heterodimers. The octamer wraps approximately 147 bp of DNA. Post-translationally, monoubiquitination of Lys-121 by the BRE1 gives a specific tag for epigenetic transcriptional activation and is also prerequisite for histone H3 'Lys-4' and 'Lys-79' methylation. In terms of processing, phosphorylated on Ser-15 during apoptosis; which facilitates apoptotic chromatin condensation.

The protein localises to the nucleus. The protein resides in the chromosome. Functionally, core component of nucleosome. Nucleosomes wrap and compact DNA into chromatin, limiting DNA accessibility to the cellular machineries which require DNA as a template. Histones thereby play a central role in transcription regulation, DNA repair, DNA replication and chromosomal stability. DNA accessibility is regulated via a complex set of post-translational modifications of histones, also called histone code, and nucleosome remodeling. In terms of biological role, has broad-spectrum antibacterial activity. May be important in the antimicrobial defenses of chick reproductive system during follicle development in the ovary and egg formation in the oviduct. In Gallus gallus (Chicken), this protein is Histone H2B 1/2/3/4/6 (H2B-I).